Consider the following 368-residue polypeptide: MCSLPRGFEPQAPEDLAQRSLVELREMLKRQERLLRNEKFICKLPDKGKKIFDSFAKLKAAIAECEEVRRKSELFNPVSLDCKLRQKAIAEVDVGTDKAQNSDPILDTSSLVPGCSSVDNIKSSQTSQNQGLGRPTLEGDEETSEVEYTVNKGPASSNRDRVPPSSEASEHHPRHRVSSQAEDTSSSFDNLFIDRLQRITIADQGEQQSEENASTKNLTGLSSGTEKKPHYMEVLEMRAKNPVPQLRKFKTNVLPFRQNDSSSHCQKSGSPISSEERRRRDKQHLDDITAARLLPLHHMPTQLLSIEESLALQKQQKQNYEEMQAKLAAQKLAERLNIKMRSYNPEGESSGRYREVRDEDDDWSSDEF.

The interval 29–68 is important for transcription repressor activity; sequence KRQERLLRNEKFICKLPDKGKKIFDSFAKLKAAIAECEEV. 3 stretches are compositionally biased toward polar residues: residues 116–131, 205–224, and 258–273; these read SSVD…QNQG, GEQQ…LSSG, and QNDS…SPIS. 3 disordered regions span residues 116–186, 203–227, and 255–282; these read SSVD…DTSS, DQGE…GTEK, and PFRQ…RRDK. Positions 227–298 are interaction with Pol II; that stretch reads KKPHYMEVLE…TAARLLPLHH (72 aa). At Ser270 the chain carries Phosphoserine. The tract at residues 299–314 is important for transcription repressor activity; the sequence is MPTQLLSIEESLALQK. The stretch at 301-335 forms a coiled coil; that stretch reads TQLLSIEESLALQKQQKQNYEEMQAKLAAQKLAER. Residues 315-340 form an interaction with Pol II region; the sequence is QQKQNYEEMQAKLAAQKLAERLNIKM. Residues 339–368 are disordered; that stretch reads KMRSYNPEGESSGRYREVRDEDDDWSSDEF. A compositionally biased stretch (acidic residues) spans 358 to 368; it reads DEDDDWSSDEF.

It belongs to the GRINL1 family. In terms of assembly, component of the Pol II(G) complex, which contains the RNA polymerase II (Pol II) core complex subunits and POLR2M isoform 1. Pol II(G) appears to be an abundant form of Pol II. In terms of processing, dephosphorylated at Ser-270 by the PNUTS-PP1 complex, promoting RNA polymerase II transcription pause-release. As to expression, detected in adult an fetal brain. Detected in heart, kidney, skeletal muscle, small intestine, lung, prostate and testis.

Its subcellular location is the nucleus. Functionally, appears to be a stable component of the Pol II(G) complex form of RNA polymerase II (Pol II). Pol II synthesizes mRNA precursors and many functional non-coding RNAs and is the central component of the basal RNA polymerase II transcription machinery. May play a role in the Mediator complex-dependent regulation of transcription activation. Acts as a negative regulator of transcriptional activation; this repression is relieved by the Mediator complex, which restores Pol II(G) activator-dependent transcription to a level equivalent to that of Pol II. The protein is DNA-directed RNA polymerase II subunit GRINL1A (POLR2M) of Homo sapiens (Human).